Reading from the N-terminus, the 374-residue chain is WW domain-binding protein 4 (374 aa).

Residues 11–42 form a Matrin-type zinc finger; it reads KFCDYCKCWIADNRPSVEFHERGKNHKENVAR. Over residues 91–109 the composition is skewed to polar residues; sequence EPTISPVTNTVQPTPTANQ. 2 disordered regions span residues 91-126 and 188-328; these read EPTI…SKGR and SKWE…EAGA. Residues 112–121 show a composition bias toward basic residues; it reads EKKKKKKKKE. WW domains lie at 121–154 and 162–195; these read EASK…KPEG and TAAK…KPDD. Composition is skewed to basic and acidic residues over residues 188–197 and 205–270; these read SKWEKPDDFI and SSKD…EKTT. Residues Ser219, Ser226, and Ser228 each carry the phosphoserine modification. Polar residues predominate over residues 315–325; the sequence is STENECLSSSE. Residues 355–373 are interaction with SNRNP200; sequence KKRRIENGKSRNLRQRGED.

Component of the spliceosome B complex. Associated with U2 snRNPs. Binds splicing factors SNRPB, SNRPC and SF1. Interacts via the WW domains with the Pro-rich domains of KHDRBS1/SAM68. Interacts via the WW domains with the Pro-rich domains of WBP11. Interacts with SNRNP200.

It is found in the nucleus. The protein resides in the nucleus speckle. In terms of biological role, involved in pre-mRNA splicing as a component of the spliceosome. May play a role in cross-intron bridging of U1 and U2 snRNPs in the mammalian A complex. The polypeptide is WW domain-binding protein 4 (Wbp4) (Rattus norvegicus (Rat)).